Reading from the N-terminus, the 66-residue chain is UPF0370 protein YpfN (66 aa).

The chain crosses the membrane as a helical span at residues 4 to 24 (LAKYWWILVLVFLVGVLLNVI). Residues 39-66 (KPELPPHRDFNDKWDDEDDWPKKDQSKK) form a disordered region. Basic and acidic residues predominate over residues 42–51 (LPPHRDFNDK).

It belongs to the UPF0370 family.

The protein localises to the cell membrane. The protein is UPF0370 protein YpfN of Salmonella arizonae (strain ATCC BAA-731 / CDC346-86 / RSK2980).